We begin with the raw amino-acid sequence, 240 residues long: Putative protein FAM10A4 (240 aa).

The segment at 38 to 94 is disordered; the sequence is MGGTATQKAKSEENTKEEKPDSKVEEDLKADEPSSEESDLEIDKEGVIEPDTDAPQE. A compositionally biased stretch (basic and acidic residues) spans 46–69; sequence AKSEENTKEEKPDSKVEEDLKADE. Residues 85–94 show a composition bias toward acidic residues; it reads IEPDTDAPQE. TPR repeat units lie at residues 110–143, 145–177, and 179–211; these read ANDK…NPRL, ILYA…NPDS, and QPYK…DYDE. Positions 220–240 are disordered; the sequence is VQPRAQKIAEHQRKYERKREE. Over residues 226–240 the composition is skewed to basic and acidic residues; sequence KIAEHQRKYERKREE.

The protein belongs to the FAM10 family. As to expression, highly expressed in bone marrow and weakly in placenta, pancreas, heart and HeLa cell line.

The protein resides in the cytoplasm. In Homo sapiens (Human), this protein is Putative protein FAM10A4 (ST13P4).